The sequence spans 272 residues: Shikimate dehydrogenase (NADP(+)) (272 aa).

Residues 14–16 (SKS) and Thr61 contribute to the shikimate site. Residue Lys65 is the Proton acceptor of the active site. Glu77 lines the NADP(+) pocket. Shikimate-binding residues include Asn86 and Asp102. Residues 126–130 (GAGGA), 149–154 (NRTASR), and Met213 contribute to the NADP(+) site. Position 215 (Tyr215) interacts with shikimate. NADP(+) is bound at residue Gly237.

It belongs to the shikimate dehydrogenase family. In terms of assembly, homodimer.

It catalyses the reaction shikimate + NADP(+) = 3-dehydroshikimate + NADPH + H(+). It participates in metabolic intermediate biosynthesis; chorismate biosynthesis; chorismate from D-erythrose 4-phosphate and phosphoenolpyruvate: step 4/7. Functionally, involved in the biosynthesis of the chorismate, which leads to the biosynthesis of aromatic amino acids. Catalyzes the reversible NADPH linked reduction of 3-dehydroshikimate (DHSA) to yield shikimate (SA). The chain is Shikimate dehydrogenase (NADP(+)) from Salmonella enteritidis PT4 (strain P125109).